We begin with the raw amino-acid sequence, 257 residues long: Pyridoxine 5'-phosphate synthase (257 aa).

Asparagine 6 is a binding site for 3-amino-2-oxopropyl phosphate. 8–9 (DH) contributes to the 1-deoxy-D-xylulose 5-phosphate binding site. Arginine 17 lines the 3-amino-2-oxopropyl phosphate pocket. The Proton acceptor role is filled by histidine 41. Positions 43 and 48 each coordinate 1-deoxy-D-xylulose 5-phosphate. Glutamate 68 acts as the Proton acceptor in catalysis. Position 98 (threonine 98) interacts with 1-deoxy-D-xylulose 5-phosphate. Histidine 210 functions as the Proton donor in the catalytic mechanism. 3-amino-2-oxopropyl phosphate-binding positions include glycine 211 and 232 to 233 (GQ).

The protein belongs to the PNP synthase family. As to quaternary structure, homooctamer; tetramer of dimers.

It is found in the cytoplasm. The catalysed reaction is 3-amino-2-oxopropyl phosphate + 1-deoxy-D-xylulose 5-phosphate = pyridoxine 5'-phosphate + phosphate + 2 H2O + H(+). Its pathway is cofactor biosynthesis; pyridoxine 5'-phosphate biosynthesis; pyridoxine 5'-phosphate from D-erythrose 4-phosphate: step 5/5. Its function is as follows. Catalyzes the complicated ring closure reaction between the two acyclic compounds 1-deoxy-D-xylulose-5-phosphate (DXP) and 3-amino-2-oxopropyl phosphate (1-amino-acetone-3-phosphate or AAP) to form pyridoxine 5'-phosphate (PNP) and inorganic phosphate. In Campylobacter jejuni subsp. jejuni serotype O:6 (strain 81116 / NCTC 11828), this protein is Pyridoxine 5'-phosphate synthase.